The sequence spans 99 residues: Aspartyl/glutamyl-tRNA(Asn/Gln) amidotransferase subunit C (99 aa).

Belongs to the GatC family. As to quaternary structure, heterotrimer of A, B and C subunits.

It carries out the reaction L-glutamyl-tRNA(Gln) + L-glutamine + ATP + H2O = L-glutaminyl-tRNA(Gln) + L-glutamate + ADP + phosphate + H(+). It catalyses the reaction L-aspartyl-tRNA(Asn) + L-glutamine + ATP + H2O = L-asparaginyl-tRNA(Asn) + L-glutamate + ADP + phosphate + 2 H(+). Allows the formation of correctly charged Asn-tRNA(Asn) or Gln-tRNA(Gln) through the transamidation of misacylated Asp-tRNA(Asn) or Glu-tRNA(Gln) in organisms which lack either or both of asparaginyl-tRNA or glutaminyl-tRNA synthetases. The reaction takes place in the presence of glutamine and ATP through an activated phospho-Asp-tRNA(Asn) or phospho-Glu-tRNA(Gln). The sequence is that of Aspartyl/glutamyl-tRNA(Asn/Gln) amidotransferase subunit C from Variovorax paradoxus (strain S110).